The following is a 296-amino-acid chain: Sulfotransferase 1C2 (296 aa).

3'-phosphoadenylyl sulfate is bound at residue 49-54 (KSGTTW). 107–109 (RTH) contacts substrate. His-109 functions as the Proton acceptor in the catalytic mechanism. Residues Arg-131, Ser-139, Tyr-194, and 228 to 233 (TSFEKM) each bind 3'-phosphoadenylyl sulfate. Ser-139 carries the phosphoserine modification. Ser-254 carries the phosphoserine modification. Position 256–260 (256–260 (FMRKG)) interacts with 3'-phosphoadenylyl sulfate.

Belongs to the sulfotransferase 1 family. In terms of tissue distribution, highly expressed in kidney and at lower levels in stomach and liver. More specifically found in the epithelia of proximal tubules of the kidney, of the bile duct, of the gastric mucosa, and in hepatocytes.

It is found in the cytoplasm. The protein resides in the lysosome. The protein localises to the mitochondrion. The catalysed reaction is a phenol + 3'-phosphoadenylyl sulfate = an aryl sulfate + adenosine 3',5'-bisphosphate + H(+). The enzyme catalyses cholesterol + 3'-phosphoadenylyl sulfate = cholesterol sulfate + adenosine 3',5'-bisphosphate + H(+). Sulfotransferase that utilizes 3'-phospho-5'-adenylyl sulfate (PAPS) to catalyze the sulfate conjugation of phenolic compounds. Does not transfer sulfate to steroids, dopamine, acetaminophen, or alpha-naphthol. Except in mitochondria, where it can add sulfate to cholesterol producing cholesterol sulfate, which alters mitochondrial membrane organization, and impacts protein complex mobility increasing state-III respiration, thereby modulating mitochondrial respiration. Catalyzes the sulfation of the carcinogenic N-hydroxy-2-acetylaminofluorene leading to highly reactive intermediates capable of forming DNA adducts, potentially resulting in mutagenesis. This chain is Sulfotransferase 1C2 (Sult1c2), found in Rattus norvegicus (Rat).